The primary structure comprises 240 residues: FMN-dependent NADH:quinone oxidoreductase 2 (240 aa).

Residues serine 10 and 23–25 (SIS) each bind FMN.

Belongs to the azoreductase type 1 family. In terms of assembly, homodimer. It depends on FMN as a cofactor.

It carries out the reaction 2 a quinone + NADH + H(+) = 2 a 1,4-benzosemiquinone + NAD(+). The enzyme catalyses N,N-dimethyl-1,4-phenylenediamine + anthranilate + 2 NAD(+) = 2-(4-dimethylaminophenyl)diazenylbenzoate + 2 NADH + 2 H(+). Its function is as follows. Quinone reductase that provides resistance to thiol-specific stress caused by electrophilic quinones. In terms of biological role, also exhibits azoreductase activity. Catalyzes the reductive cleavage of the azo bond in aromatic azo compounds to the corresponding amines. The chain is FMN-dependent NADH:quinone oxidoreductase 2 from Idiomarina loihiensis (strain ATCC BAA-735 / DSM 15497 / L2-TR).